Reading from the N-terminus, the 1670-residue chain is Hemolymph clottable protein (1670 aa).

Positions 1-14 are cleaved as a signal peptide; it reads MKALILLLLGACQA. The tract at residues 15–674 is vittelogenin; sequence LQPGLEYQYR…FANFVTTTIY (660 aa). The 750-residue stretch at 15–764 folds into the Vitellogenin domain; sequence LQPGLEYQYR…LKIDGQQRGL (750 aa). Asn106 carries N-linked (GlcNAc...) asparagine glycosylation. The span at 198–231 shows a compositional bias: low complexity; the sequence is SSYTTKTKSKTSSKTSSKTSSKTSSKTSKTGKTS. The tract at residues 198–236 is disordered; the sequence is SSYTTKTKSKTSSKTSSKTSSKTSSKTSKTGKTSPGQLA. 3 N-linked (GlcNAc...) asparagine glycosylation sites follow: Asn319, Asn459, and Asn1301. Residues 1390–1550 form the VWFD domain; that stretch reads VSCTIDETKV…SWASPGEGCA (161 aa). 2 disulfide bridges follow: Cys1392/Cys1513 and Cys1414/Cys1549.

As to quaternary structure, homodimer; disulfide-linked. Also exists as oligomers. Post-translationally, glycosylated. Contains mannose and N-acetylglucosamine. In terms of processing, substrate of transglutaminase. As to expression, widely expressed with highest levels in gill and heart. Not expressed in hemocytes.

The protein resides in the secreted. Functionally, forms stable clots in the presence of calcium. The polypeptide is Hemolymph clottable protein (Penaeus monodon (Giant tiger prawn)).